The sequence spans 470 residues: Neuraminidase (470 aa).

The Intravirion segment spans residues 1–14 (MNPNQKIITIGSVS). Residues 11 to 32 (GSVSLGLVVLNILLHIVSITIT) are involved in apical transport and lipid raft association. Residues 15-35 (LGLVVLNILLHIVSITITVLV) traverse the membrane as a helical segment. Residues 32–86 (TVLVLPGNGNNPSCNETVIREYNETVRIERVTQWHNTNVIEYLERPESDHFMNNT) form a hypervariable stalk region region. Residues 36 to 470 (LPGNGNNPSC…AILPFDIDKM (435 aa)) lie on the Virion surface side of the membrane. N-linked (GlcNAc...) asparagine; by host glycans are attached at residues asparagine 46, asparagine 54, and asparagine 84. A head of neuraminidase region spans residues 89–470 (LCDAKGFAPF…AILPFDIDKM (382 aa)). Cystine bridges form between cysteine 90–cysteine 417, cysteine 122–cysteine 127, cysteine 182–cysteine 229, cysteine 231–cysteine 236, cysteine 277–cysteine 290, cysteine 279–cysteine 288, cysteine 316–cysteine 335, and cysteine 421–cysteine 446. Substrate is bound at residue arginine 116. Residue asparagine 144 is glycosylated (N-linked (GlcNAc...) asparagine; by host). Catalysis depends on aspartate 149, which acts as the Proton donor/acceptor. A substrate-binding site is contributed by arginine 150. 275 to 276 (EE) serves as a coordination point for substrate. Arginine 291 contributes to the substrate binding site. Aspartate 292 is a Ca(2+) binding site. Asparagine 293 is a glycosylation site (N-linked (GlcNAc...) asparagine; by host). Glycine 296 and aspartate 322 together coordinate Ca(2+). Arginine 368 provides a ligand contact to substrate. N-linked (GlcNAc...) asparagine; by host glycosylation occurs at asparagine 398. The active-site Nucleophile is the tyrosine 402.

It belongs to the glycosyl hydrolase 34 family. In terms of assembly, homotetramer. Ca(2+) is required as a cofactor. N-glycosylated.

The protein localises to the virion membrane. It is found in the host apical cell membrane. The enzyme catalyses Hydrolysis of alpha-(2-&gt;3)-, alpha-(2-&gt;6)-, alpha-(2-&gt;8)- glycosidic linkages of terminal sialic acid residues in oligosaccharides, glycoproteins, glycolipids, colominic acid and synthetic substrates.. Inhibited by the neuraminidase inhibitors zanamivir (Relenza) and oseltamivir (Tamiflu). These drugs interfere with the release of progeny virus from infected cells and are effective against all influenza strains. Resistance to neuraminidase inhibitors is quite rare. Its function is as follows. Catalyzes the removal of terminal sialic acid residues from viral and cellular glycoconjugates. Cleaves off the terminal sialic acids on the glycosylated HA during virus budding to facilitate virus release. Additionally helps virus spread through the circulation by further removing sialic acids from the cell surface. These cleavages prevent self-aggregation and ensure the efficient spread of the progeny virus from cell to cell. Otherwise, infection would be limited to one round of replication. Described as a receptor-destroying enzyme because it cleaves a terminal sialic acid from the cellular receptors. May facilitate viral invasion of the upper airways by cleaving the sialic acid moieties on the mucin of the airway epithelial cells. Likely to plays a role in the budding process through its association with lipid rafts during intracellular transport. May additionally display a raft-association independent effect on budding. Plays a role in the determination of host range restriction on replication and virulence. Sialidase activity in late endosome/lysosome traffic seems to enhance virus replication. In Aves, this protein is Neuraminidase.